A 222-amino-acid chain; its full sequence is UPF0758 protein YicR (222 aa).

An MPN domain is found at 100–222 (PLLSPEMTRE…YVSFAERGWI (123 aa)). Residues His171, His173, and Asp184 each coordinate Zn(2+). The short motif at 171 to 184 (HNHPSGCAEPSKAD) is the JAMM motif element.

Belongs to the UPF0758 family. YicR subfamily.

The polypeptide is UPF0758 protein YicR (Escherichia coli O9:H4 (strain HS)).